Consider the following 322-residue polypeptide: Protein farnesyltransferase/geranylgeranyltransferase type-1 subunit alpha (322 aa).

The tract at residues 1–27 is disordered; the sequence is MSSSEEDDGYVPFSKRPEWSDVKPLAQ. PFTA repeat units lie at residues 62–95, 103–136, 138–171, 173–205, 213–246, and 287–321; these read RVLD…EQDE, QEMN…IGSD, KEKE…RDWN, ELAM…NPSP, REVE…KIST, and NSLN…LKLI.

The protein belongs to the protein prenyltransferase subunit alpha family. Heterodimer of fntA and fntB (farnesyltransferase). Heterodimer of an alpha and a beta subunit. It depends on Mg(2+) as a cofactor.

It carries out the reaction L-cysteinyl-[protein] + (2E,6E)-farnesyl diphosphate = S-(2E,6E)-farnesyl-L-cysteinyl-[protein] + diphosphate. The catalysed reaction is geranylgeranyl diphosphate + L-cysteinyl-[protein] = S-geranylgeranyl-L-cysteinyl-[protein] + diphosphate. Its function is as follows. Catalyzes the transfer of a farnesyl or geranyl-geranyl moiety from farnesyl or geranyl-geranyl diphosphate to a cysteine at the fourth position from the C-terminus of several proteins having the C-terminal sequence Cys-aliphatic-aliphatic-X. The alpha subunit is thought to participate in a stable complex with the substrate. The beta subunit binds the peptide substrate. This is Protein farnesyltransferase/geranylgeranyltransferase type-1 subunit alpha (fntA) from Dictyostelium discoideum (Social amoeba).